The primary structure comprises 1499 residues: B-cell CLL/lymphoma 9-like protein (1499 aa).

2 disordered regions span residues 1–238 (MRIL…PPSQ) and 271–500 (VPRA…MGQQ). Residues 20-37 (GSPPLSPRGHCPPAPAKP) are compositionally biased toward pro residues. 2 positions are modified to phosphoserine: serine 21 and serine 25. Lysine 36 bears the N6-acetyllysine mark. 2 stretches are compositionally biased toward polar residues: residues 45–70 (TNHG…TCNV) and 85–96 (NQISPSNSSLKN). A Phosphoserine modification is found at serine 88. An N6-acetyllysine mark is found at lysine 108 and lysine 110. Basic and acidic residues-rich tracts occupy residues 114 to 126 (DRSV…EQRE) and 134 to 153 (SEAK…ERKQ). Phosphoserine is present on residues serine 116 and serine 118. Lysine 137 carries the N6-acetyllysine modification. Positions 193-205 (PGQTTQLPLSESS) are enriched in polar residues. Gly residues predominate over residues 222-232 (PGGGGGGGGVP). 2 stretches are compositionally biased toward pro residues: residues 281-291 (KVPPTPEPLPL) and 301-325 (SQPP…PPEG). A necessary for interaction with CTNNB1 region spans residues 304 to 533 (PPLPPPPPPA…QEEYYEEKRR (230 aa)). Low complexity-rich tracts occupy residues 351-363 (THPN…TANN) and 370-387 (DPSS…AAPG). Residues 399-421 (LSKEQLEHRERSLQTLRDIERLL) show a composition bias toward basic and acidic residues. Position 424 is a phosphoserine (serine 424). Residues 445-458 (AQAPPPPQQPPTAP) are compositionally biased toward pro residues. Threonine 514 bears the Phosphothreonine mark. An Asymmetric dimethylarginine modification is found at arginine 680. Serine 750, serine 813, serine 915, serine 926, serine 938, serine 942, serine 947, serine 975, serine 987, serine 991, serine 997, serine 1004, serine 1010, and serine 1017 each carry phosphoserine. Disordered stretches follow at residues 888-1084 (SHMP…QNPL) and 1116-1201 (ELLP…PQNS). Over residues 935-960 (PTLSQVHSPLVTSPSANLKSPQTPSQ) the composition is skewed to polar residues. The span at 978–996 (VLGSSLSVRSPTGSPSRLK) shows a compositional bias: polar residues. 2 stretches are compositionally biased toward polar residues: residues 1019–1041 (GVSQ…NMEQ) and 1069–1084 (LPFT…QNPL). Pro residues-rich tracts occupy residues 1122–1132 (PLLPPPPPPQG) and 1168–1179 (HEPPPAMLPSPT). A Glycyl lysine isopeptide (Lys-Gly) (interchain with G-Cter in SUMO2) cross-link involves residue lysine 1344.

It belongs to the BCL9 family. In terms of assembly, found in a complex with CDC73; CTNNB1 and PYGO1. Interacts with CTNNB1. As to expression, expressed in breast, ductal and invasive ductal carcinomas of the breast, sporadic colorectal adenomas and carcinomas (at protein level). Expressed in fetal brain. Expressed in lung, amygdala, eye, prostate, pancreatic and prostate cancers, head and neck tumors and embryonal tumor.

Its subcellular location is the nucleus. Functionally, transcriptional regulator that acts as an activator. Promotes beta-catenin transcriptional activity. Plays a role in tumorigenesis. Enhances the neoplastic transforming activity of CTNNB1. The sequence is that of B-cell CLL/lymphoma 9-like protein (BCL9L) from Homo sapiens (Human).